A 109-amino-acid chain; its full sequence is Probable glutaredoxin slr1562 (109 aa).

The 99-residue stretch at 11–109 folds into the Glutaredoxin domain; that stretch reads LSGRQADGIK…PLLATPPNPA (99 aa). A disulfide bridge links cysteine 31 with cysteine 34.

It belongs to the glutaredoxin family.

Functionally, has a glutathione-disulfide oxidoreductase activity in the presence of NADPH and glutathione reductase. Reduces low molecular weight disulfides and proteins. The protein is Probable glutaredoxin slr1562 of Synechocystis sp. (strain ATCC 27184 / PCC 6803 / Kazusa).